Here is a 238-residue protein sequence, read N- to C-terminus: Ribose-5-phosphate isomerase A (238 aa).

Residues 30–33, 87–90, and 100–103 each bind substrate; these read SGST, DGAD, and KGGG. Residue Glu-109 is the Proton acceptor of the active site. Lys-127 is a substrate binding site.

Belongs to the ribose 5-phosphate isomerase family. Homodimer.

It carries out the reaction aldehydo-D-ribose 5-phosphate = D-ribulose 5-phosphate. Its pathway is carbohydrate degradation; pentose phosphate pathway; D-ribose 5-phosphate from D-ribulose 5-phosphate (non-oxidative stage): step 1/1. Catalyzes the reversible conversion of ribose-5-phosphate to ribulose 5-phosphate. This is Ribose-5-phosphate isomerase A from Synechococcus sp. (strain CC9311).